We begin with the raw amino-acid sequence, 1112 residues long: Cytosolic carboxypeptidase 4 (1112 aa).

The tract at residues 291-345 is disordered; it reads TTEPPHDLPEEDFEDDGDDEVDKDSDTEDGKVEDDDLETDVNKLSSKPGLDRPEE. Over residues 299–329 the composition is skewed to acidic residues; the sequence is PEEDFEDDGDDEVDKDSDTEDGKVEDDDLET. Residues 732 to 1022 form the Peptidase M14 domain; the sequence is YPYTYTALMT…HPVDGLQGLQ (291 aa). Residues His804, Glu807, and His901 each contribute to the Zn(2+) site. The Proton donor/acceptor role is filled by Glu986.

Belongs to the peptidase M14 family. Interacts with MYLK. Interacts with TCF4. The cofactor is Zn(2+). In terms of tissue distribution, expressed in corneal endothelium.

The protein localises to the cytoplasm. It localises to the cytosol. The catalysed reaction is (L-glutamyl)(n+1)-gamma-L-glutamyl-L-glutamyl-[protein] + H2O = (L-glutamyl)(n)-gamma-L-glutamyl-L-glutamyl-[protein] + L-glutamate. The enzyme catalyses C-terminal L-alpha-aminoacyl-L-glutamyl-L-glutamyl-[tubulin] + H2O = C-terminal L-alpha-aminoacyl-L-glutamyl-[tubulin] + L-glutamate. Its function is as follows. Metallocarboxypeptidase that mediates deglutamylation of tubulin and non-tubulin target proteins. Catalyzes the removal of polyglutamate side chains present on the gamma-carboxyl group of glutamate residues within the C-terminal tail of tubulin protein. Specifically cleaves tubulin long-side-chains, while it is not able to remove the branching point glutamate. Also catalyzes the removal of polyglutamate residues from the carboxy-terminus of non-tubulin proteins such as MYLK. This chain is Cytosolic carboxypeptidase 4, found in Homo sapiens (Human).